The following is a 430-amino-acid chain: UPF0597 protein BDI_1130 (430 aa).

Belongs to the UPF0597 family.

The chain is UPF0597 protein BDI_1130 from Parabacteroides distasonis (strain ATCC 8503 / DSM 20701 / CIP 104284 / JCM 5825 / NCTC 11152).